The following is a 378-amino-acid chain: Chlorophyll synthase, chloroplastic (378 aa).

Residues M1 to V45 constitute a chloroplast transit peptide. A run of 7 helical transmembrane segments spans residues V173–I193, F199–P219, F232–T252, I257–F277, W302–T322, Y327–L347, and Y357–S377.

The protein belongs to the UbiA prenyltransferase family. Chlorophyll synthase subfamily. Mg(2+) serves as cofactor. Requires Zn(2+) as cofactor. Mn(2+) is required as a cofactor.

It is found in the plastid. Its subcellular location is the chloroplast membrane. It catalyses the reaction phytyl diphosphate + chlorophyllide a + H(+) = chlorophyll a + diphosphate. Its activity is regulated as follows. Inhibited by N-phenylmaleimide (NPM) and diacetyl. Its function is as follows. Involved in one of the last steps of the biosynthesis of chlorophyll a. Catalyzes the esterification of chlorophillide a with either geranylgeranyldiphosphate (GGPP) or phytyldiphosphate (PhyPP). May also use with a lower efficiency the monophosphates GGMP and PhyMP, but not the non-phosphorylated alcohols geranylgeraniol and phytol. The tetraprenyl diphosphate must bind to the enzyme as the first substrate and esterification occurs when this pre-loaded enzyme meets the second substrate, chlorophyllide. This Avena sativa (Oat) protein is Chlorophyll synthase, chloroplastic (CHLG).